A 326-amino-acid polypeptide reads, in one-letter code: Biotin synthase (326 aa).

Positions 40-264 constitute a Radical SAM core domain; the sequence is GQVQACTLVS…VLPRSYVRLA (225 aa). Residues C55, C59, and C62 each coordinate [4Fe-4S] cluster. Residues C99, C130, C190, and R262 each contribute to the [2Fe-2S] cluster site.

Belongs to the radical SAM superfamily. Biotin synthase family. Homodimer. Requires [4Fe-4S] cluster as cofactor. [2Fe-2S] cluster serves as cofactor.

It carries out the reaction (4R,5S)-dethiobiotin + (sulfur carrier)-SH + 2 reduced [2Fe-2S]-[ferredoxin] + 2 S-adenosyl-L-methionine = (sulfur carrier)-H + biotin + 2 5'-deoxyadenosine + 2 L-methionine + 2 oxidized [2Fe-2S]-[ferredoxin]. The protein operates within cofactor biosynthesis; biotin biosynthesis; biotin from 7,8-diaminononanoate: step 2/2. In terms of biological role, catalyzes the conversion of dethiobiotin (DTB) to biotin by the insertion of a sulfur atom into dethiobiotin via a radical-based mechanism. This chain is Biotin synthase, found in Halorhodospira halophila (strain DSM 244 / SL1) (Ectothiorhodospira halophila (strain DSM 244 / SL1)).